The chain runs to 368 residues: POU domain, class 3, transcription factor 1 (368 aa).

Positions 1–16 are enriched in polar residues; it reads MATTAQYIPRNNSLPS. Disordered regions lie at residues 1-28, 69-88, 100-134, and 147-193; these read MATT…DRMH, TDWT…ASVQ, SHLV…NGHQ, and SPQP…PSSD. The segment covering 79-88 has biased composition (basic and acidic residues); it reads QAEHNKASVQ. The span at 105–134 shows a compositional bias: polar residues; it reads QPTQNSHHGSWAPTTTHHLSPLSPASNGHQ. Residues 155-170 show a composition bias toward basic and acidic residues; that stretch reads GLRDPLHDDAGSHDNQ. A POU-specific domain is found at 187 to 261; that stretch reads EDAPSSDDLE…LLNKWLEETD (75 aa). Residues 279–338 constitute a DNA-binding region (homeobox); the sequence is KRKKRTSIEVGVKGALENHFLKCPKPSAHEITTLAGTLQLEKEVVRVWFCNRRQKEKRMT.

Belongs to the POU transcription factor family. Class-3 subfamily. In terms of tissue distribution, predominantly expressed in the embryonic and adult central nervous system.

The protein localises to the nucleus. Functionally, transcription factor that may play important roles in patterning the embryonic brain. Could directly respond to the reception of the sonic hedgehog (shh) signal. The polypeptide is POU domain, class 3, transcription factor 1 (pou3f1) (Danio rerio (Zebrafish)).